The sequence spans 82 residues: Small ribosomal subunit protein bS16c (82 aa).

Belongs to the bacterial ribosomal protein bS16 family.

The protein resides in the plastid. It is found in the chloroplast. In Porphyra purpurea (Red seaweed), this protein is Small ribosomal subunit protein bS16c.